The sequence spans 2365 residues: Voltage-dependent T-type calcium channel subunit alpha-1H (2365 aa).

The tract at residues 1–63 is disordered; that stretch reads MTEGTLAADE…PGTECGADLG (63 aa). The Cytoplasmic segment spans residues 1–100; that stretch reads MTEGTLAADE…SWCLRLVSRR (100 aa). A compositionally biased stretch (low complexity) spans 16 to 36; the sequence is GASPSAPAAPVRASPASPGVP. The I repeat unit spans residues 87 to 422; the sequence is TRPRSWCLRL…LCLVVIATQF (336 aa). Residues 101-119 traverse the membrane as a helical segment; that stretch reads WFEHISMLVIMLNCVTLGM. Residues 120-141 lie on the Extracellular side of the membrane; the sequence is FRPCEDVECRSERCSILEAFDD. Residue aspartate 140 coordinates Zn(2+). The chain crosses the membrane as a helical span at residues 142-160; it reads FIFAFFAVEMVIKMVALGL. Topologically, residues 161–169 are cytoplasmic; the sequence is FGQKCYLGD. A helical membrane pass occupies residues 170-184; it reads TWNRLDFFIVMAGMM. The Extracellular portion of the chain corresponds to 185–193; sequence EYSLDGHNV. The Zn(2+) site is built by aspartate 189 and histidine 191. Asparagine 192 carries N-linked (GlcNAc...) asparagine glycosylation. A helical transmembrane segment spans residues 194–212; that stretch reads SLSAIRTVRVLRPLRAINR. The Cytoplasmic segment spans residues 213–232; that stretch reads VPSMRILVTLLLDTLPMLGN. Residues 233 to 253 traverse the membrane as a helical segment; the sequence is VLLLCFFVFFIFGIVGVQLWA. Over 254 to 394 the chain is Extracellular; it reads GLLRNRCFLD…YYVMDAHSFY (141 aa). The N-linked (GlcNAc...) asparagine glycan is linked to asparagine 271. A helical transmembrane segment spans residues 395–419; it reads NFIYFILLIIVGSFFMINLCLVVIA. Topologically, residues 420–790 are cytoplasmic; the sequence is TQFSETKQRE…SKLRRIVDSK (371 aa). Disordered regions lie at residues 490 to 573, 618 to 656, and 737 to 761; these read VDPS…SESV, PSGAVNSKGSTSSRPKGLRSAGTPGATAHSPLSLGSPSP, and GDCRDPVQQPHEGGTPGHGNERWRP. Basic residues predominate over residues 500–532; it reads GPRRRPRRAGRRTASVHHLVYHHHHHHHHHYHF. A compositionally biased stretch (pro residues) spans 557-566; it reads PPSPPSPGHG. Residues 621–631 show a composition bias toward polar residues; it reads AVNSKGSTSSR. An II repeat occupies 776–1015; the sequence is WASFSSKLRR…LLVAILVEGF (240 aa). A helical transmembrane segment spans residues 791-811; it reads YFNRGIMAAILVNTLSMGVEY. Over 812–824 the chain is Extracellular; the sequence is HEQPDELTNALEI. A helical membrane pass occupies residues 825–846; that stretch reads SNIVFTSMFALEMLLKLLACGP. The Cytoplasmic segment spans residues 847–852; it reads LGYIRN. The helical transmembrane segment at 853–871 threads the bilayer; the sequence is PYNIFDGIVVIISVWEIVG. At 872 to 879 the chain is on the extracellular side; the sequence is QADGGLSV. A helical transmembrane segment spans residues 880–903; the sequence is LRTFRLLRVLKLVRFLPALRRQLV. The Cytoplasmic portion of the chain corresponds to 904-914; the sequence is VLMRTMDNVAT. The chain crosses the membrane as a helical span at residues 915–935; sequence FCMLLMLFIFIFSILGMHLFG. Topologically, residues 936 to 987 are extracellular; sequence CKFSLKTDSGDTVPDRKNFDSLLWAIVTVFQILTQEDWNVVLYNGMASTSSW. The chain crosses the membrane as a helical span at residues 988–1012; sequence AALYFVALMTFGNYVLFNLLVAILV. Over 1013-1301 the chain is Cytoplasmic; it reads EGFQAEGDAT…NRLRVSCQKV (289 aa). A disordered region spans residues 1059 to 1215; the sequence is PNGHLEGRGS…HRSTMDLCPP (157 aa). Residues 1130 to 1147 are compositionally biased toward low complexity; the sequence is GPNSAGSSRRSSWNSLGR. The span at 1199 to 1209 shows a compositional bias: basic and acidic residues; that stretch reads RRAESLGHRST. The stretch at 1292 to 1569 is one III repeat; sequence NRLRVSCQKV…MFVGVVVENF (278 aa). The helical transmembrane segment at 1302-1324 threads the bilayer; that stretch reads IAHKMFDHVVLVFIFLNCITIAL. At 1325–1342 the chain is on the extracellular side; sequence ERPDIDPGSTERAFLSVS. The chain crosses the membrane as a helical span at residues 1343–1363; the sequence is NYIFTAIFVVEMMVKVVALGL. Topologically, residues 1364-1373 are cytoplasmic; it reads LWGEHAYLQS. A helical transmembrane segment spans residues 1374-1393; that stretch reads SWNVLDGLLVLVSLVDIIVA. Residues 1394–1407 lie on the Extracellular side of the membrane; sequence VASAGGAKILGVLR. A helical membrane pass occupies residues 1408-1429; sequence VLRLLRTLRPLRVISRAPGLKL. Topologically, residues 1430–1439 are cytoplasmic; that stretch reads VVETLISSLR. The chain crosses the membrane as a helical span at residues 1440-1463; the sequence is PIGNIVLICCAFFIIFGILGVQLF. At 1464–1540 the chain is on the extracellular side; sequence KGKFYYCEGT…DQQPVQNHNP (77 aa). N-linked (GlcNAc...) asparagine glycosylation occurs at asparagine 1477. A helical transmembrane segment spans residues 1541–1566; that stretch reads WMLLYFISFLLIVSFFVLNMFVGVVV. Residues 1567-1627 lie on the Cytoplasmic side of the membrane; the sequence is ENFHKCRQHQ…RRSIHSLCTS (61 aa). An IV repeat occupies 1613 to 1874; the sequence is DYSHTRRSIH…VVVAVLMKHL (262 aa). A helical transmembrane segment spans residues 1628–1648; the sequence is HYLDLFITFIICLNVITMSME. Topologically, residues 1649-1662 are extracellular; that stretch reads HYNQPKSLDEALKY. The chain crosses the membrane as a helical span at residues 1663 to 1684; that stretch reads CNYVFTIVFVFEAALKLVAFGF. Residues 1685–1691 lie on the Cytoplasmic side of the membrane; that stretch reads RRFFKDR. A helical transmembrane segment spans residues 1692 to 1710; the sequence is WNQLDLAIVLLSIMGIALE. The Extracellular segment spans residues 1711–1724; the sequence is EIEMNAALPINPTI. The helical transmembrane segment at 1725 to 1748 threads the bilayer; sequence IRIMRVLRIARVLKLLKMATGMRA. The Cytoplasmic segment spans residues 1749–1762; sequence LLDTVVQALPQVGN. The chain crosses the membrane as a helical span at residues 1763–1783; it reads LGLLFMLLFFIYAALGVELFG. Over 1784–1846 the chain is Extracellular; that stretch reads RLECSEDNPC…KHCLSYLPAL (63 aa). Residues 1847–1874 form a helical membrane-spanning segment; sequence SPVYFVTFVLVAQFVLVNVVVAVLMKHL. At 1875-2365 the chain is on the cytoplasmic side; sequence EESNKEARED…APDDSGDEPV (491 aa). Composition is skewed to polar residues over residues 1897–1916 and 1967–1983; these read QGSTAQPPSTAQESQGTEPD and VTSAHSPSLEPRTSFQV. 4 disordered regions span residues 1897–1920, 1967–1999, 2053–2264, and 2321–2365; these read QGSTAQPPSTAQESQGTEPDTPNL, VTSAHSPSLEPRTSFQVPSAASSPARVSDPLCA, APLG…GERW, and ELSM…DEPV. The segment covering 2092-2102 has biased composition (acidic residues); that stretch reads DDAEAADPADE. A compositionally biased stretch (basic and acidic residues) spans 2172–2187; that stretch reads GDGHLESGEVRARASE.

Belongs to the calcium channel alpha-1 subunit (TC 1.A.1.11) family. CACNA1H subfamily. Interacts (via N-terminal cytoplasmic domain) with STAC. In response to raising of intracellular calcium, the T-type channels are activated by CaM-kinase II. As to expression, is highly expressed in lumbosacral and thoracolumbar dorsal root ganglion neurons.

The protein localises to the cell membrane. The enzyme catalyses Ca(2+)(in) = Ca(2+)(out). Voltage-sensitive calcium channel that gives rise to T-type calcium currents. T-type calcium channels belong to the 'low-voltage activated (LVA)' group. A particularity of this type of channel is an opening at quite negative potentials, and a voltage-dependent inactivation. T-type channels serve pacemaking functions in both central neurons and cardiac nodal cells and support calcium signaling in secretory cells and vascular smooth muscle. They may also be involved in the modulation of firing patterns of neurons. In the adrenal zona glomerulosa, participates in the signaling pathway leading to aldosterone production in response to either AGT/angiotensin II, or hyperkalemia. In Mus musculus (Mouse), this protein is Voltage-dependent T-type calcium channel subunit alpha-1H (Cacna1h).